Reading from the N-terminus, the 596-residue chain is Leucine zipper putative tumor suppressor 1 (596 aa).

G2 is lipidated: N-myristoyl glycine. Disordered stretches follow at residues 136–193 (AILH…SYQL) and 295–324 (YEER…SQKS). Over residues 153–162 (PPDKPKEQEL) the composition is skewed to basic and acidic residues. The span at 178–190 (SMSSLPTHSTSSS) shows a compositional bias: low complexity. The stretch at 256–374 (ISTDECSIQE…SYEREKTSFG (119 aa)) forms a coiled coil. Residues 295–310 (YEERPRRCRDELEGPE) are compositionally biased toward basic and acidic residues.

Belongs to the LZTS family. Binds EEF1G, TLK2 and CDK1. Phosphorylated on serine residues. Hyperphosphorylated by the cAMP-dependent kinase PKA during cell-cycle progression. In terms of tissue distribution, highly expressed in testis, prostate, spleen, thymus, ovary and brain. Detected at lower levels in heart, placenta, small intestine, colon, liver, kidney, skeletal muscle and pancreas. Not detectable in primary tumors from breast and prostate and in many cancer cell lines.

It localises to the cytoplasm. The protein resides in the cell membrane. The protein localises to the cell projection. It is found in the dendritic spine. Its subcellular location is the postsynaptic density. It localises to the synapse. Involved in the regulation of cell growth. May stabilize the active CDC2-cyclin B1 complex and thereby contribute to the regulation of the cell cycle and the prevention of uncontrolled cell proliferation. May act as a tumor suppressor. This Homo sapiens (Human) protein is Leucine zipper putative tumor suppressor 1 (LZTS1).